A 504-amino-acid chain; its full sequence is Alkylcitrate dehydratase phiI (504 aa).

This sequence belongs to the PrpD family. In terms of assembly, monomer.

The enzyme catalyses (4E,11E)-2-hydroxytrideca-4,11-dien-1,2,3-tricarboxylate + 2 H(+) = [4-(deca-1,8-diyl)-2,5-dioxo-2,5-dihydro-3-furanyl]acetate + 2 H2O. Its pathway is secondary metabolite biosynthesis. Its function is as follows. Alkylcitrate dehydratase; part of the gene cluster that mediates the biosynthesis of the antihypercholesterolemic agents phomoidrides which are dimeric anhydrides. Within the pathway, the alkylcitrate synthase (ACS) phiJ and the alkylcitrate dehydratase (ACDH) phiI produce the decarboxylated monomeric anhydrides by coupling the C12-fatty acyl product from phiA with oxalacetic acid. The pathway begins with the highly reducing polyketide synthase phiA that catalyzes the formation of a C12-fatty acyl-ACP, starting from one acetate and 5 malonate units. The hydrolase phiM is involved in the release of the C12-fatty acyl chain from phiA. The alkylcitrate synthase (ACS) phiJ and the alkylcitrate dehydratase (ACDH) phiI then give rise to decarboxylated monomeric anhydrides by coupling the C12-fatty acyl chain with oxalacetic acid. The cyclase phiC is responsible for the dimerization of the monomeric anhydrides which leads to the production of prephomoidride that contains the characteristic bicyclo[4.3.1]deca-1,6-diene system of phomoidrides. Iterative oxidation catalyzed by the alpha-ketoglutarate-dependent dioxygenase phiK produced then phomoidride A. Finally, the methyltransferase phiE converts phomoidride A to phomoidride B via an acetalization reaction. The phosphatidylethanolamine-binding protein phiB and phiN are not essential for dimerization and their functions have still to be determined. The chain is Alkylcitrate dehydratase phiI from Fungal sp. (strain ATCC 74256).